A 135-amino-acid polypeptide reads, in one-letter code: Succinate dehydrogenase assembly factor 3, mitochondrial (135 aa).

Positions 73–101 are disordered; sequence KENSNNNDNYNNNNNDNNNDNNNFINIGQ. Residues 75 to 95 are compositionally biased toward low complexity; that stretch reads NSNNNDNYNNNNNDNNNDNNN.

It belongs to the complex I LYR family. SDHAF3 subfamily. In terms of assembly, interacts with the iron-sulfur protein subunit within the SDH catalytic dimer.

It localises to the mitochondrion matrix. In terms of biological role, plays an essential role in the assembly of succinate dehydrogenase (SDH), an enzyme complex (also referred to as respiratory complex II) that is a component of both the tricarboxylic acid (TCA) cycle and the mitochondrial electron transport chain, and which couples the oxidation of succinate to fumarate with the reduction of ubiquinone (coenzyme Q) to ubiquinol. Promotes maturation of the iron-sulfur protein subunit of the SDH catalytic dimer, protecting it from the deleterious effects of oxidants. May act together with SDHAF1. In Dictyostelium discoideum (Social amoeba), this protein is Succinate dehydrogenase assembly factor 3, mitochondrial (acn9).